Reading from the N-terminus, the 25-residue chain is GLVSSIGKALGGLLADVVKTKEQPA.

As to expression, expressed by the skin parotoid and/or rostral glands.

Its subcellular location is the secreted. Functionally, antibacterial peptide, that adopts an alpha helical conformation which can disrupt bacterial membranes. Each caerin displays a different antimicrobial specificity. In Ranoidea caerulea (Green tree frog), this protein is Caerin-2.4.